Reading from the N-terminus, the 186-residue chain is UPF0397 protein LCABL_04350 (186 aa).

The next 5 membrane-spanning stretches (helical) occupy residues 12-32 (VVAI…AVIP), 45-65 (GFLG…IGFL), 77-97 (TPWW…GLFW), 112-132 (IVSF…LIAP), and 150-170 (GIVS…ILLV).

This sequence belongs to the UPF0397 family.

The protein localises to the cell membrane. The protein is UPF0397 protein LCABL_04350 of Lacticaseibacillus casei (strain BL23) (Lactobacillus casei).